A 231-amino-acid polypeptide reads, in one-letter code: Ribose-5-phosphate isomerase A (231 aa).

Substrate contacts are provided by residues 32-35 (TGST), 85-88 (DGAD), and 98-101 (KGGG). Catalysis depends on Glu107, which acts as the Proton acceptor. Residue Lys125 participates in substrate binding.

Belongs to the ribose 5-phosphate isomerase family. In terms of assembly, homodimer.

The catalysed reaction is aldehydo-D-ribose 5-phosphate = D-ribulose 5-phosphate. Its pathway is carbohydrate degradation; pentose phosphate pathway; D-ribose 5-phosphate from D-ribulose 5-phosphate (non-oxidative stage): step 1/1. Catalyzes the reversible conversion of ribose-5-phosphate to ribulose 5-phosphate. The protein is Ribose-5-phosphate isomerase A of Paraburkholderia phytofirmans (strain DSM 17436 / LMG 22146 / PsJN) (Burkholderia phytofirmans).